The sequence spans 355 residues: Chorismate synthase (355 aa).

R48 lines the NADP(+) pocket. FMN contacts are provided by residues 126 to 128 (RSS), G278, 293 to 297 (KPIPS), and R319.

Belongs to the chorismate synthase family. Homotetramer. It depends on FMNH2 as a cofactor.

It carries out the reaction 5-O-(1-carboxyvinyl)-3-phosphoshikimate = chorismate + phosphate. Its pathway is metabolic intermediate biosynthesis; chorismate biosynthesis; chorismate from D-erythrose 4-phosphate and phosphoenolpyruvate: step 7/7. Catalyzes the anti-1,4-elimination of the C-3 phosphate and the C-6 proR hydrogen from 5-enolpyruvylshikimate-3-phosphate (EPSP) to yield chorismate, which is the branch point compound that serves as the starting substrate for the three terminal pathways of aromatic amino acid biosynthesis. This reaction introduces a second double bond into the aromatic ring system. The chain is Chorismate synthase from Oleidesulfovibrio alaskensis (strain ATCC BAA-1058 / DSM 17464 / G20) (Desulfovibrio alaskensis).